The primary structure comprises 497 residues: Di-/tripeptide transporter (497 aa).

Residues 1-36 are Cytoplasmic-facing; the sequence is MQNLNKTEKTFFGQPRGLLTLFQTEFWERFSYYGMR. A helical transmembrane segment spans residues 37 to 55; sequence AILVYYLYALTTADNAGLG. Over 56–64 the chain is Extracellular; the sequence is LPKAQAMAI. Residues 65–83 traverse the membrane as a helical segment; the sequence is VSIYGALVYLSTIVGGWVA. The Cytoplasmic segment spans residues 84–92; that stretch reads DRLLGASRT. The helical transmembrane segment at 93–111 threads the bilayer; sequence IFLGGILITLGHVALATPF. Residues 112 to 115 lie on the Extracellular side of the membrane; sequence GLSS. A helical transmembrane segment spans residues 116 to 134; it reads LFVALFLIILGTGMLKPNI. At 135–154 the chain is on the cytoplasmic side; the sequence is SNMVGHLYSKDDSRRDTGFN. Residues 155 to 173 traverse the membrane as a helical segment; it reads IFVVGINMGSLIAPLIVGT. Over 174 to 181 the chain is Extracellular; that stretch reads VGQGVNYH. The helical transmembrane segment at 182–200 threads the bilayer; it reads LGFSLAAIGMIFALFAYWY. Residues 201–224 lie on the Cytoplasmic side of the membrane; the sequence is GRLRHFPEIGREPSNPMDAKAKRN. The helical transmembrane segment at 225 to 243 threads the bilayer; that stretch reads FIITLTIVLIVALIGFFLI. Topologically, residues 244-254 are extracellular; it reads YQASPANFINN. A helical transmembrane segment spans residues 255-273; it reads FINVLSIIGIVVPIIYFVM. Residues 274 to 293 are Cytoplasmic-facing; it reads MFTSKKVESDERRKLTAYIP. The chain crosses the membrane as a helical span at residues 294–312; the sequence is LFLSAIVFWAIEEQSSTII. The Extracellular portion of the chain corresponds to 313 to 335; the sequence is AVWGESRSNLNPTWFGFTFHIDP. A helical membrane pass occupies residues 336–354; that stretch reads SWYQLLNPLFIVLLSPIFV. The Cytoplasmic portion of the chain corresponds to 355 to 372; sequence RIWNKLGDRQPSTIVKFG. A helical transmembrane segment spans residues 373-391; the sequence is LGLMLTGASYLIMTLPGLL. Residues 392 to 425 are Extracellular-facing; that stretch reads NGTSGRASALWLVLMFAVQMAGELLVSPVGLSVS. Residues 426–444 traverse the membrane as a helical segment; it reads TKLAPVAFQSQMMAMWFLA. The Cytoplasmic segment spans residues 445 to 497; sequence DSTSQAINAQITPIFKAATEVHFFAITGIIGIIVGIILLIIKKPILKLMGDVR.

This sequence belongs to the major facilitator superfamily. Proton-dependent oligopeptide transporter (POT/PTR) (TC 2.A.17) family.

It localises to the cell membrane. Its function is as follows. Proton-dependent uptake of di- or tri-peptides. The protein is Di-/tripeptide transporter (dtpT) of Lactococcus lactis subsp. cremoris (Streptococcus cremoris).